The sequence spans 238 residues: Probable xyloglucan-specific endo-beta-1,4-glucanase A (238 aa).

The first 18 residues, 1–18 (MKLSLSVALSLAASTAQA), serve as a signal peptide directing secretion. Asn-106 and Asn-171 each carry an N-linked (GlcNAc...) asparagine glycan.

This sequence belongs to the glycosyl hydrolase 12 (cellulase H) family.

The protein localises to the secreted. It catalyses the reaction xyloglucan + H2O = xyloglucan oligosaccharides.. Its function is as follows. Catalyzes endohydrolysis of 1,4-beta-D-glucosidic linkages in xyloglucan with retention of the beta-configuration of the glycosyl residues. Specific for xyloglucan and does not hydrolyze other cell wall components. This is Probable xyloglucan-specific endo-beta-1,4-glucanase A (xgeA) from Aspergillus fumigatus (strain ATCC MYA-4609 / CBS 101355 / FGSC A1100 / Af293) (Neosartorya fumigata).